Here is a 635-residue protein sequence, read N- to C-terminus: Chaperone protein HtpG (635 aa).

The interval 1–336 (MTTAEAAAPE…SADLPLNLSR (336 aa)) is a; substrate-binding. The b stretch occupies residues 337–556 (EMLQDSAILA…ESGIDRRLEK (220 aa)). Residues 557 to 635 (LLASAGRLGD…RVMQRGLPTA (79 aa)) are c.

It belongs to the heat shock protein 90 family. Homodimer.

It localises to the cytoplasm. Functionally, molecular chaperone. Has ATPase activity. This chain is Chaperone protein HtpG, found in Azorhizobium caulinodans (strain ATCC 43989 / DSM 5975 / JCM 20966 / LMG 6465 / NBRC 14845 / NCIMB 13405 / ORS 571).